Consider the following 255-residue polypeptide: Small ribosomal subunit protein eS1 (255 aa).

Residues 1–18 are compositionally biased toward basic residues; the sequence is MAVGKNKRLSKGKKGLKK. Residues 1 to 20 form a disordered region; it reads MAVGKNKRLSKGKKGLKKRV. A2 is modified (N-acetylalanine; partial).

The protein belongs to the eukaryotic ribosomal protein eS1 family. As to quaternary structure, component of the small ribosomal subunit. Mature ribosomes consist of a small (40S) and a large (60S) subunit. The 40S subunit contains about 33 different proteins and 1 molecule of RNA (18S). The 60S subunit contains about 49 different proteins and 3 molecules of RNA (25S, 5.8S and 5S).

It localises to the cytoplasm. The polypeptide is Small ribosomal subunit protein eS1 (Coccidioides immitis (strain RS) (Valley fever fungus)).